The chain runs to 88 residues: MSETNERNRRHVYQGRVVSDKMDKTIVVVVDTYKNHPVYSKRIRYSKKYYAQDENNEAKVGDTVRIMETRPLSRKKRFRLVKIVKKSV.

The protein belongs to the universal ribosomal protein uS17 family. In terms of assembly, part of the 30S ribosomal subunit.

Functionally, one of the primary rRNA binding proteins, it binds specifically to the 5'-end of 16S ribosomal RNA. This is Small ribosomal subunit protein uS17 from Lactobacillus helveticus (strain DPC 4571).